Reading from the N-terminus, the 92-residue chain is Small ribosomal subunit protein uS19 (92 aa).

This sequence belongs to the universal ribosomal protein uS19 family.

Protein S19 forms a complex with S13 that binds strongly to the 16S ribosomal RNA. The protein is Small ribosomal subunit protein uS19 of Granulibacter bethesdensis (strain ATCC BAA-1260 / CGDNIH1).